Reading from the N-terminus, the 493-residue chain is Transcript termination protein A18 (493 aa).

One can recognise a Helicase ATP-binding domain in the interval 100–256 (MIELKRPLYI…NSIINIAKLS (157 aa)). Residue 113-120 (LACGFGKT) coordinates ATP. The short motif at 206–209 (DESH) is the DESH box element. The 148-residue stretch at 309-456 (ILDTLVEEFK…IISLSVDKLG (148 aa)) folds into the Helicase C-terminal domain.

This sequence belongs to the helicase family. Poxviruses subfamily. As to quaternary structure, interacts with G2. Might be part of a transcription complex composed at least of G2, A18, and H5.

The protein resides in the virion. Functionally, DNA helicase which seems to act as a postreplicative transcription termination factor. Involved in ATP-dependent release of nascent RNA. Forms a stable complex with single-stranded DNA, and to a lesser extent RNA. The polypeptide is Transcript termination protein A18 (Mus musculus (Mouse)).